Here is a 142-residue protein sequence, read N- to C-terminus: Large ribosomal subunit protein uL11 (142 aa).

Belongs to the universal ribosomal protein uL11 family. In terms of assembly, part of the ribosomal stalk of the 50S ribosomal subunit. Interacts with L10 and the large rRNA to form the base of the stalk. L10 forms an elongated spine to which L12 dimers bind in a sequential fashion forming a multimeric L10(L12)X complex. In terms of processing, one or more lysine residues are methylated.

Functionally, forms part of the ribosomal stalk which helps the ribosome interact with GTP-bound translation factors. The polypeptide is Large ribosomal subunit protein uL11 (Mesoplasma florum (strain ATCC 33453 / NBRC 100688 / NCTC 11704 / L1) (Acholeplasma florum)).